The following is a 57-amino-acid chain: Large ribosomal subunit protein bL32 (57 aa).

Residues 1-20 show a composition bias toward basic residues; sequence MAVPKKKTSKTKRDQRKANW. The disordered stretch occupies residues 1–21; that stretch reads MAVPKKKTSKTKRDQRKANWK.

It belongs to the bacterial ribosomal protein bL32 family.

In Rippkaea orientalis (strain PCC 8801 / RF-1) (Cyanothece sp. (strain PCC 8801)), this protein is Large ribosomal subunit protein bL32.